Reading from the N-terminus, the 36-residue chain is Pancreatic polypeptide (36 aa).

Tyr-36 is subject to Tyrosine amide.

This sequence belongs to the NPY family.

The protein resides in the secreted. In terms of biological role, hormone secreted by pancreatic cells that acts as a regulator of pancreatic and gastrointestinal functions. The chain is Pancreatic polypeptide (PPY) from Larus argentatus (Herring gull).